We begin with the raw amino-acid sequence, 353 residues long: Histidinol-phosphate aminotransferase (353 aa).

Position 218 is an N6-(pyridoxal phosphate)lysine (Lys218).

This sequence belongs to the class-II pyridoxal-phosphate-dependent aminotransferase family. Histidinol-phosphate aminotransferase subfamily. Homodimer. It depends on pyridoxal 5'-phosphate as a cofactor.

The enzyme catalyses L-histidinol phosphate + 2-oxoglutarate = 3-(imidazol-4-yl)-2-oxopropyl phosphate + L-glutamate. The protein operates within amino-acid biosynthesis; L-histidine biosynthesis; L-histidine from 5-phospho-alpha-D-ribose 1-diphosphate: step 7/9. The polypeptide is Histidinol-phosphate aminotransferase (Synechococcus sp. (strain JA-3-3Ab) (Cyanobacteria bacterium Yellowstone A-Prime)).